Consider the following 177-residue polypeptide: UPF0200 protein STK_09500 (177 aa).

11–18 (GMPGSGKG) is an ATP binding site.

It belongs to the UPF0200 family.

The protein is UPF0200 protein STK_09500 of Sulfurisphaera tokodaii (strain DSM 16993 / JCM 10545 / NBRC 100140 / 7) (Sulfolobus tokodaii).